We begin with the raw amino-acid sequence, 349 residues long: Glycosyltransferase 8 domain-containing protein 2 (349 aa).

Residues 1–6 (MALLRK) lie on the Cytoplasmic side of the membrane. The helical; Signal-anchor for type II membrane protein transmembrane segment at 7 to 24 (INQVLLFLLIVTLCVILY) threads the bilayer. Residues 25 to 349 (KKVHKGTVSK…AGIFKLNHHS (325 aa)) are Lumenal-facing. Asn234 carries N-linked (GlcNAc...) asparagine glycosylation.

This sequence belongs to the glycosyltransferase 8 family.

It is found in the membrane. In Macaca fascicularis (Crab-eating macaque), this protein is Glycosyltransferase 8 domain-containing protein 2 (GLT8D2).